A 469-amino-acid chain; its full sequence is NADH-quinone oxidoreductase subunit 13 (469 aa).

A run of 14 helical transmembrane segments spans residues 1–21 (MVVL…LGLP), 23–43 (ALGV…FLTH), 47–67 (VAHA…AFGL), 69–89 (GLSA…ALVA), 91–111 (VEGR…GLFA), 115–135 (LLVF…MLYL), 144–164 (ALYT…AAVL), 190–210 (AFWV…LFPL), 258–278 (GLLL…AFAA), 284–304 (LLAY…FSGT), 308–328 (AMGG…LFLL), 354–374 (LAAL…LSGF), 390–410 (WLAA…LTAF), and 430–450 (WGFA…PGYF).

This sequence belongs to the complex I subunit 4 family. As to quaternary structure, NDH-1 is composed of 15 different subunits, Nqo1 to Nqo15. The complex has a L-shaped structure, with the hydrophobic arm (subunits Nqo7, Nqo8 and Nqo10 to Nqo14) embedded in the membrane and the hydrophilic peripheral arm (subunits Nqo1 to Nqo6, Nqo9 and Nqo15) protruding into the bacterial cytoplasm. The hydrophilic domain contains all the redox centers.

It localises to the cell inner membrane. It catalyses the reaction a quinone + NADH + 5 H(+)(in) = a quinol + NAD(+) + 4 H(+)(out). Functionally, NDH-1 shuttles electrons from NADH, via FMN and iron-sulfur (Fe-S) centers, to quinones in the respiratory chain. The immediate electron acceptor for the enzyme in this species is menaquinone. Couples the redox reaction to proton translocation (for every two electrons transferred, four hydrogen ions are translocated across the cytoplasmic membrane), and thus conserves the redox energy in a proton gradient required for the synthesis of ATP. This Thermus thermophilus (strain ATCC 27634 / DSM 579 / HB8) protein is NADH-quinone oxidoreductase subunit 13 (nqo13).